Consider the following 393-residue polypeptide: NADH-quinone oxidoreductase subunit D (393 aa).

Belongs to the complex I 49 kDa subunit family. As to quaternary structure, NDH-1 is composed of 14 different subunits. Subunits NuoB, C, D, E, F, and G constitute the peripheral sector of the complex.

The protein resides in the cell inner membrane. It carries out the reaction a quinone + NADH + 5 H(+)(in) = a quinol + NAD(+) + 4 H(+)(out). In terms of biological role, NDH-1 shuttles electrons from NADH, via FMN and iron-sulfur (Fe-S) centers, to quinones in the respiratory chain. The immediate electron acceptor for the enzyme in this species is believed to be ubiquinone. Couples the redox reaction to proton translocation (for every two electrons transferred, four hydrogen ions are translocated across the cytoplasmic membrane), and thus conserves the redox energy in a proton gradient. The chain is NADH-quinone oxidoreductase subunit D from Ehrlichia ruminantium (strain Welgevonden).